A 223-amino-acid chain; its full sequence is Ribose-5-phosphate isomerase A (223 aa).

Residues 32 to 35 (TGST), 85 to 88 (DGAD), and 98 to 101 (KGGG) each bind substrate. The Proton acceptor role is filled by E107. Substrate is bound at residue K125.

Belongs to the ribose 5-phosphate isomerase family. In terms of assembly, homodimer.

The enzyme catalyses aldehydo-D-ribose 5-phosphate = D-ribulose 5-phosphate. It participates in carbohydrate degradation; pentose phosphate pathway; D-ribose 5-phosphate from D-ribulose 5-phosphate (non-oxidative stage): step 1/1. Its function is as follows. Catalyzes the reversible conversion of ribose-5-phosphate to ribulose 5-phosphate. This chain is Ribose-5-phosphate isomerase A, found in Pseudomonas syringae pv. syringae (strain B728a).